A 517-amino-acid polypeptide reads, in one-letter code: DNA-directed RNA polymerase subunit alpha (517 aa).

This sequence belongs to the RNA polymerase alpha chain family. In terms of assembly, in plastids the minimal PEP RNA polymerase catalytic core is composed of four subunits: alpha, beta, beta', and beta''. When a (nuclear-encoded) sigma factor is associated with the core the holoenzyme is formed, which can initiate transcription.

The protein resides in the plastid. Its subcellular location is the chloroplast. The enzyme catalyses RNA(n) + a ribonucleoside 5'-triphosphate = RNA(n+1) + diphosphate. Its function is as follows. DNA-dependent RNA polymerase catalyzes the transcription of DNA into RNA using the four ribonucleoside triphosphates as substrates. In Stigeoclonium helveticum (Green alga), this protein is DNA-directed RNA polymerase subunit alpha (rpoA).